Consider the following 454-residue polypeptide: MNIVILAAGMGKRMHSDLPKVLHPVAGRPMLAHVIDTARTLSPSRLVVVIGHGAERVREAVAADDVTFAEQDQQLGTGHAVMQALPQLDDNQPTLVLYGDVPLTTAATLKALVEAAGNTRFGVLTVEMPDPTGYGRIVRDAAGSIVRIVEQKDASEAVRAIREINTGIIVCPTGHLRRWLATLRNDNAQGEYYLTDTVERAATEGIDIVSAQPAALWETLGVNSKVQLAEVERIHQRNLAQRLLETGVTLADPARIDVRGELTCGRDVSIDIGCVFEGRVHLGDGVQIGANCVIRNSSIDAGAQVQPFCHIDSAKIGADGRIGPYARLRPGTELGEDVHIGNFVEVKNSQVAAHSKANHLAYVGDATVGARVNIGAGTITCNYDGANKFRTVIEDDVFIGSDTQLVAPVTVRRGATIGAGTTLTKEAPADKLTLSRAKQMTLDAWQRPVKKAKQ.

The interval 1 to 225 is pyrophosphorylase; sequence MNIVILAAGM…LWETLGVNSK (225 aa). UDP-N-acetyl-alpha-D-glucosamine contacts are provided by residues 6 to 9, lysine 20, glutamine 71, 76 to 77, 98 to 100, glycine 135, glutamate 150, asparagine 165, and asparagine 223; these read LAAG, GT, and YGD. Aspartate 100 serves as a coordination point for Mg(2+). Asparagine 223 is a Mg(2+) binding site. Positions 226-246 are linker; it reads VQLAEVERIHQRNLAQRLLET. Positions 247-454 are N-acetyltransferase; that stretch reads GVTLADPARI…WQRPVKKAKQ (208 aa). Residues arginine 329 and lysine 347 each coordinate UDP-N-acetyl-alpha-D-glucosamine. Histidine 359 (proton acceptor) is an active-site residue. UDP-N-acetyl-alpha-D-glucosamine is bound by residues tyrosine 362 and asparagine 373. Acetyl-CoA is bound by residues alanine 376, 382 to 383, serine 401, alanine 419, and arginine 436; that span reads NY.

This sequence in the N-terminal section; belongs to the N-acetylglucosamine-1-phosphate uridyltransferase family. It in the C-terminal section; belongs to the transferase hexapeptide repeat family. In terms of assembly, homotrimer. It depends on Mg(2+) as a cofactor.

The protein localises to the cytoplasm. The catalysed reaction is alpha-D-glucosamine 1-phosphate + acetyl-CoA = N-acetyl-alpha-D-glucosamine 1-phosphate + CoA + H(+). It carries out the reaction N-acetyl-alpha-D-glucosamine 1-phosphate + UTP + H(+) = UDP-N-acetyl-alpha-D-glucosamine + diphosphate. It functions in the pathway nucleotide-sugar biosynthesis; UDP-N-acetyl-alpha-D-glucosamine biosynthesis; N-acetyl-alpha-D-glucosamine 1-phosphate from alpha-D-glucosamine 6-phosphate (route II): step 2/2. The protein operates within nucleotide-sugar biosynthesis; UDP-N-acetyl-alpha-D-glucosamine biosynthesis; UDP-N-acetyl-alpha-D-glucosamine from N-acetyl-alpha-D-glucosamine 1-phosphate: step 1/1. It participates in bacterial outer membrane biogenesis; LPS lipid A biosynthesis. In terms of biological role, catalyzes the last two sequential reactions in the de novo biosynthetic pathway for UDP-N-acetylglucosamine (UDP-GlcNAc). The C-terminal domain catalyzes the transfer of acetyl group from acetyl coenzyme A to glucosamine-1-phosphate (GlcN-1-P) to produce N-acetylglucosamine-1-phosphate (GlcNAc-1-P), which is converted into UDP-GlcNAc by the transfer of uridine 5-monophosphate (from uridine 5-triphosphate), a reaction catalyzed by the N-terminal domain. The chain is Bifunctional protein GlmU from Cupriavidus pinatubonensis (strain JMP 134 / LMG 1197) (Cupriavidus necator (strain JMP 134)).